A 449-amino-acid chain; its full sequence is Phosphoglucosamine mutase (449 aa).

Ser-101 acts as the Phosphoserine intermediate in catalysis. Positions 101, 242, 244, and 246 each coordinate Mg(2+). Ser-101 carries the phosphoserine modification.

This sequence belongs to the phosphohexose mutase family. Mg(2+) is required as a cofactor. Post-translationally, activated by phosphorylation.

It carries out the reaction alpha-D-glucosamine 1-phosphate = D-glucosamine 6-phosphate. In terms of biological role, catalyzes the conversion of glucosamine-6-phosphate to glucosamine-1-phosphate. The protein is Phosphoglucosamine mutase of Bradyrhizobium sp. (strain ORS 278).